Consider the following 634-residue polypeptide: MAEEQDFAQLCRLPTQPSHSHCVNNTYRSTQHSQALLRGLLALRDSGILFDVVLVVEGKHIEAHRILLAASCDYFRGMFAGGLKEMEQEEVLIHGVSYNAMCQILHFIYTSELELSLSNVQETLVAACQLQIPEIIHFCCDFLMSWVDEENILDVYRLADLFDLNHLTQQLDTYILKNFVAFSRTDKYRQLPLEKVYSLLSSNRLEVSCETEVYEGALLYHYSLEQVQADQISLNEPPKLLETVRFPLMEAEVLQRLHDKLGPSPLRDTVASALMYHRNEILQPSLQGPQTELRSDFQCVVGFGGIHSTPSTILSDQAKYLNPLLGEWKHFTASLAPRMSNQGIAVLNNFVYLIGGDNNVQGFRAESRCWRYDPRHNRWFQIQSLQQEHADLCVCVVGKYIYAVAGRDYHNDLSAVERYDPATNSWDYVAPLKKEVYAHAGTTLQGKMYITCGRRGEDYLKETHCYDPGSNTWHTLADGPVRRAWHGMAALLDKLFVIGGSNNDAGYRRDVHQVACYSCTSRQWSSVCPLPAGHGEPGIAVLDSRIYVLGGRSHNRGSRTGYVHIYDMEKDCWEEGPQLNNSISGLAACVLTLPRSLLHEQPRGTPNRSQADADFASEVMSVSDWEEFDNSSED.

N-acetylalanine is present on alanine 2. Residues 50–117 form the BTB domain; sequence FDVVLVVEGK…IYTSELELSL (68 aa). Kelch repeat units lie at residues 299–349, 350–399, 400–446, 448–493, 495–544, and 545–593; these read CVVG…VLNN, FVYL…VVGK, YIYA…TLQG, MYIT…ALLD, LFVI…VLDS, and RIYV…VLTL. Residue threonine 463 is modified to Phosphothreonine. The residue at position 466 (tyrosine 466) is a Phosphotyrosine. Threonine 475 carries the phosphothreonine modification. Positions 600–634 are disordered; it reads EQPRGTPNRSQADADFASEVMSVSDWEEFDNSSED. Residue threonine 605 is modified to Phosphothreonine. Residues 624 to 634 are compositionally biased toward acidic residues; the sequence is DWEEFDNSSED.

In terms of assembly, component of the BCR(KLHL22) E3 ubiquitin ligase complex, at least composed of CUL3, KLHL22 and RBX1. Interacts with PLK1. Interacts with DEPDC5 (via DEP domain); the interaction depends on amino acid availability. Interacts with YWHAE; required for the nuclear localization of KLHL22 upon amino acid starvation.

It localises to the cytoplasm. It is found in the cytosol. Its subcellular location is the cytoskeleton. The protein resides in the microtubule organizing center. The protein localises to the centrosome. It localises to the spindle. It is found in the nucleus. Its subcellular location is the lysosome. It functions in the pathway protein modification; protein ubiquitination. Functionally, substrate-specific adapter of a BCR (BTB-CUL3-RBX1) E3 ubiquitin ligase complex required for chromosome alignment and localization of PLK1 at kinetochores. The BCR(KLHL22) ubiquitin ligase complex mediates monoubiquitination of PLK1, leading to PLK1 dissociation from phosphoreceptor proteins and subsequent removal from kinetochores, allowing silencing of the spindle assembly checkpoint (SAC) and chromosome segregation. Monoubiquitination of PLK1 does not lead to PLK1 degradation. The BCR(KLHL22) ubiquitin ligase complex is also responsible for the amino acid-stimulated 'Lys-48' polyubiquitination and proteasomal degradation of DEPDC5. Through the degradation of DEPDC5, releases the GATOR1 complex-mediated inhibition of the TORC1 pathway. It is therefore an amino acid-dependent activator within the amino acid-sensing branch of the TORC1 pathway, indirectly regulating different cellular processes including cell growth and autophagy. In Mus musculus (Mouse), this protein is Kelch-like protein 22.